The sequence spans 744 residues: Zinc finger protein 483 (744 aa).

The SCAN box domain occupies 52-134 (RQRFRWFCYS…TLIEDLTQML (83 aa)). The disordered stretch occupies residues 137–156 (KDPVSQDSTVSQEENSKEDK). The region spanning 170–241 (ITLKDVAVNF…EEVSKSSRLD (72 aa)) is the KRAB domain. Disordered stretches follow at residues 263–308 (ESQQ…SPFG) and 350–385 (KEKT…KIHL). Over residues 277 to 293 (NQGNSKGRVAQNKTLGS) the composition is skewed to polar residues. Basic and acidic residues-rich tracts occupy residues 298–308 (KKFDPDKSPFG) and 350–363 (KEKT…KSND). 11 C2H2-type zinc fingers span residues 439-461 (HKCS…RRIH), 467-489 (YMCN…HRTH), 495-517 (FKCD…QRIH), 523-545 (YKCK…QRIH), 551-573 (YTCS…QRIH), 579-601 (YKCG…QRIH), 607-629 (YLCN…QRLH), 635-657 (YKCN…QRIH), 663-685 (YKCK…HRIH), 691-713 (YECN…LKIH), and 719-741 (YECN…RGFH).

It belongs to the krueppel C2H2-type zinc-finger protein family.

The protein resides in the nucleus. Functionally, may be involved in transcriptional regulation. The chain is Zinc finger protein 483 (ZNF483) from Homo sapiens (Human).